The chain runs to 273 residues: Embryonic polyadenylate-binding protein 2 (273 aa).

The tract at residues serine 22 to glutamate 57 is disordered. The region spanning arginine 143–threonine 220 is the RRM domain.

The protein localises to the cytoplasm. Functionally, binds the poly(A) tail of mRNA. In Mus musculus (Mouse), this protein is Embryonic polyadenylate-binding protein 2 (Pabpn1l).